The sequence spans 97 residues: Co-chaperonin GroES (97 aa).

It belongs to the GroES chaperonin family. In terms of assembly, heptamer of 7 subunits arranged in a ring. Interacts with the chaperonin GroEL.

The protein localises to the cytoplasm. Its function is as follows. Together with the chaperonin GroEL, plays an essential role in assisting protein folding. The GroEL-GroES system forms a nano-cage that allows encapsulation of the non-native substrate proteins and provides a physical environment optimized to promote and accelerate protein folding. GroES binds to the apical surface of the GroEL ring, thereby capping the opening of the GroEL channel. The protein is Co-chaperonin GroES of Pseudomonas putida (strain ATCC 700007 / DSM 6899 / JCM 31910 / BCRC 17059 / LMG 24140 / F1).